The chain runs to 559 residues: Polypeptide N-acetylgalactosaminyltransferase 1 (559 aa).

The Cytoplasmic segment spans residues 1-8; that stretch reads MRKFAYCK. A helical; Signal-anchor for type II membrane protein transmembrane segment spans residues 9–28; that stretch reads VVLATSLIWVLLDMFLLLYF. The Lumenal segment spans residues 29-559; it reads SECNKCDEKK…LRNVTLPEIF (531 aa). Positions 45 to 66 are disordered; sequence GDVLEPVQKPHEGPGEMGKPVV. N-linked (GlcNAc...) asparagine glycosylation is present at N95. Intrachain disulfides connect C106-C339, C330-C408, C442-C459, C482-C497, and C523-C540. The catalytic subdomain A stretch occupies residues 115–225; it reads LPTTSVVIVF…VGWLEPLLAR (111 aa). Residues D156 and R186 each coordinate substrate. Mn(2+) is bound by residues D209 and H211. The catalytic subdomain B stretch occupies residues 285-347; the sequence is PVRTPTMAGG…TCSHVGHVFR (63 aa). W316 contributes to the substrate binding site. Position 344 (H344) interacts with Mn(2+). Substrate contacts are provided by R347 and Y352. Residues 429-551 enclose the Ricin B-type lectin domain; sequence SSLGEIRNVE…GSRSQQWLLR (123 aa). The N-linked (GlcNAc...) asparagine glycan is linked to N552.

This sequence belongs to the glycosyltransferase 2 family. GalNAc-T subfamily. The cofactor is Mn(2+).

It localises to the golgi apparatus. The protein resides in the golgi stack membrane. It is found in the secreted. The enzyme catalyses L-seryl-[protein] + UDP-N-acetyl-alpha-D-galactosamine = a 3-O-[N-acetyl-alpha-D-galactosaminyl]-L-seryl-[protein] + UDP + H(+). The catalysed reaction is L-threonyl-[protein] + UDP-N-acetyl-alpha-D-galactosamine = a 3-O-[N-acetyl-alpha-D-galactosaminyl]-L-threonyl-[protein] + UDP + H(+). Its pathway is protein modification; protein glycosylation. Functionally, catalyzes the initial reaction in O-linked oligosaccharide biosynthesis, the transfer of an N-acetyl-D-galactosamine residue to a serine or threonine residue on the protein receptor. Has a broad spectrum of substrates such as apomucin-, MUC5AC-, MUC1- and MUC2-derived peptides. In Sus scrofa (Pig), this protein is Polypeptide N-acetylgalactosaminyltransferase 1.